Reading from the N-terminus, the 237-residue chain is 3-oxoacyl-[acyl-carrier-protein] reductase (237 aa).

The residue at position 1 (M1) is an N-acetylmethionine. NADP(+) contacts are provided by residues 11 to 14, 34 to 35, D56, and 83 to 85; these read SRGI, RN, and AAG. Substrate is bound at residue S135. NADP(+)-binding positions include Y148, K152, and 181–183; that span reads IHT. Y148 functions as the Proton acceptor in the catalytic mechanism. K195 is modified (N6-acetyllysine).

The protein belongs to the short-chain dehydrogenases/reductases (SDR) family. Homotetramer (in vitro). Heterotetramer with HSD17B8; contains two molecules each of HSD17B8 and CBR4. Does not form homotetramers when HSD17B8 is coexpressed, only heterotetramers (in vitro).

It is found in the mitochondrion matrix. The catalysed reaction is a (3R)-hydroxyacyl-[ACP] + NADP(+) = a 3-oxoacyl-[ACP] + NADPH + H(+). It catalyses the reaction a quinone + NADPH + H(+) = a quinol + NADP(+). Its pathway is lipid metabolism; fatty acid biosynthesis. Its function is as follows. Component of the heterotetramer complex KAR (3-ketoacyl-[acyl carrier protein] reductase or 3-ketoacyl-[ACP] reductase) that forms part of the mitochondrial fatty acid synthase (mtFAS). Beta-subunit of the KAR heterotetramer complex, responsible for the 3-ketoacyl-ACP reductase activity of the mtFAS, reduces 3-oxoacyl-[ACP] to (3R)-hydroxyacyl-[ACP] in a NADPH-dependent manner with no chain length preference, thereby participating in mitochondrial fatty acid biosynthesis. The homotetramer has NADPH-dependent quinone reductase activity (in vitro), hence could play a role in protection against cytotoxicity of exogenous quinones. As a heterotetramer, it can also reduce 9,10-phenanthrenequinone, 1,4-benzoquinone and various other o-quinones and p-quinones (in vitro). The sequence is that of 3-oxoacyl-[acyl-carrier-protein] reductase (CBR4) from Bos taurus (Bovine).